The following is a 553-amino-acid chain: Formate--tetrahydrofolate ligase (553 aa).

Residue 62–69 participates in ATP binding; that stretch reads TPAGEGKS.

The protein belongs to the formate--tetrahydrofolate ligase family.

The catalysed reaction is (6S)-5,6,7,8-tetrahydrofolate + formate + ATP = (6R)-10-formyltetrahydrofolate + ADP + phosphate. It functions in the pathway one-carbon metabolism; tetrahydrofolate interconversion. In Limosilactobacillus reuteri subsp. reuteri (strain JCM 1112) (Lactobacillus reuteri), this protein is Formate--tetrahydrofolate ligase.